The following is a 64-amino-acid chain: Large ribosomal subunit protein bL32 (64 aa).

Belongs to the bacterial ribosomal protein bL32 family.

This chain is Large ribosomal subunit protein bL32, found in Mycoplasma mobile (strain ATCC 43663 / 163K / NCTC 11711) (Mesomycoplasma mobile).